The sequence spans 436 residues: MGQVLPLVTRQGDRIAIVSGLRTPFARQATAFHGIPAGDLGKMVVGELLARTEIPAEVIEQLVFGQVVQMPEAPNIAREIVLGTGMNVHTDAYSVSRACATSFQAVANVAESLMAGTIRAGIAGGADSSSVLPIGVSKKLARVLVDVNKARTMSQRLKLFSRLRLRDLMPVPPAVAEYSTGLRMGDTAEQMAKTYGITREQQDALAHRSHQRAAQAWSEGKLKEEVMTAFIPPYKQPLVEDNNIRGNSSLADYAKLRPAFDRKHGTVTAANSTPLTDGAAAVILMTESRAKELGLVPLGYLRSYAFTAIDVWQDMLLGPAWSTPLALERAGLTMSDLTLIDMHEAFAAQTLANIQLLGSERFARDVLGRAHATGEVDDSKFNVLGGSIAYGHPFAATGARMITQTLHELRRRGGGFGLVTACAAGGLGAAMVLEAE.

Cys-99 serves as the catalytic Acyl-thioester intermediate. Catalysis depends on proton acceptor residues His-392 and Cys-422.

It belongs to the thiolase-like superfamily. Thiolase family. As to quaternary structure, heterotetramer of two alpha chains (FadJ) and two beta chains (FadI).

The protein resides in the cytoplasm. The enzyme catalyses an acyl-CoA + acetyl-CoA = a 3-oxoacyl-CoA + CoA. It functions in the pathway lipid metabolism; fatty acid beta-oxidation. Its function is as follows. Catalyzes the final step of fatty acid oxidation in which acetyl-CoA is released and the CoA ester of a fatty acid two carbons shorter is formed. The sequence is that of 3-ketoacyl-CoA thiolase from Escherichia coli O127:H6 (strain E2348/69 / EPEC).